Here is a 110-residue protein sequence, read N- to C-terminus: UPF0122 protein lwe1821 (110 aa).

This sequence belongs to the UPF0122 family.

In terms of biological role, might take part in the signal recognition particle (SRP) pathway. This is inferred from the conservation of its genetic proximity to ftsY/ffh. May be a regulatory protein. The sequence is that of UPF0122 protein lwe1821 from Listeria welshimeri serovar 6b (strain ATCC 35897 / DSM 20650 / CCUG 15529 / CIP 8149 / NCTC 11857 / SLCC 5334 / V8).